We begin with the raw amino-acid sequence, 334 residues long: D-fructose 1,6-bisphosphatase class 2/sedoheptulose 1,7-bisphosphatase (334 aa).

Mn(2+) is bound by residues D33, E57, D85, and E88. Residues 88-90 (EGT), Y119, 164-166 (RAR), and 186-188 (DGD) contribute to the substrate site. E213 provides a ligand contact to Mn(2+).

It belongs to the FBPase class 2 family. As to quaternary structure, homotetramer. Requires Mn(2+) as cofactor.

It catalyses the reaction beta-D-fructose 1,6-bisphosphate + H2O = beta-D-fructose 6-phosphate + phosphate. It carries out the reaction D-sedoheptulose 1,7-bisphosphate + H2O = D-sedoheptulose 7-phosphate + phosphate. It participates in carbohydrate biosynthesis; Calvin cycle. Functionally, catalyzes the hydrolysis of fructose 1,6-bisphosphate (Fru 1,6-P2) and sedoheptulose 1,7-bisphosphate (Sed 1,7-P2) to fructose 6-phosphate and sedoheptulose 7-phosphate, respectively. The sequence is that of D-fructose 1,6-bisphosphatase class 2/sedoheptulose 1,7-bisphosphatase from Synechococcus sp. (strain CC9311).